The primary structure comprises 365 residues: Cobalt-precorrin-5B C(1)-methyltransferase (365 aa).

The protein belongs to the CbiD family.

The enzyme catalyses Co-precorrin-5B + S-adenosyl-L-methionine = Co-precorrin-6A + S-adenosyl-L-homocysteine. It participates in cofactor biosynthesis; adenosylcobalamin biosynthesis; cob(II)yrinate a,c-diamide from sirohydrochlorin (anaerobic route): step 6/10. Catalyzes the methylation of C-1 in cobalt-precorrin-5B to form cobalt-precorrin-6A. This Paraburkholderia phytofirmans (strain DSM 17436 / LMG 22146 / PsJN) (Burkholderia phytofirmans) protein is Cobalt-precorrin-5B C(1)-methyltransferase.